The following is a 372-amino-acid chain: N-methyl-L-tryptophan oxidase (372 aa).

4 to 34 contributes to the FAD binding site; it reads DLIIIGSGSVGAAAGYYATRAGLNVLMTDAH. Residue Cys308 is modified to S-8alpha-FAD cysteine.

Belongs to the MSOX/MTOX family. MTOX subfamily. As to quaternary structure, monomer. The cofactor is FAD.

It catalyses the reaction N(alpha)-methyl-L-tryptophan + O2 + H2O = L-tryptophan + formaldehyde + H2O2. Its function is as follows. Catalyzes the oxidative demethylation of N-methyl-L-tryptophan. The chain is N-methyl-L-tryptophan oxidase from Shigella flexneri serotype 5b (strain 8401).